The primary structure comprises 415 residues: Fructose-1,6-bisphosphatase, chloroplastic (415 aa).

A chloroplast-targeting transit peptide spans 1 to 57; it reads MASIGPATTTAVKLRSSIFNPQSSTLSPSQQCITFTKSLHSFPTATRHNVASGVRCM. The Mg(2+) site is built by Glu-135, Glu-164, Asp-185, Leu-187, and Asp-188. 188–191 contributes to the substrate binding site; that stretch reads DGSS. The segment at 207-232 is involved in light regulation; the sequence is SPNDECIVDSDHDDESQLSAEEQRCV. Residues Cys-231 and Cys-236 are joined by a disulfide bond. Asn-295, Tyr-327, Tyr-345, Tyr-347, and Lys-357 together coordinate substrate. Glu-363 lines the Mg(2+) pocket.

The protein belongs to the FBPase class 1 family. As to quaternary structure, homotetramer. Requires Mg(2+) as cofactor.

It localises to the plastid. It is found in the chloroplast. The enzyme catalyses beta-D-fructose 1,6-bisphosphate + H2O = beta-D-fructose 6-phosphate + phosphate. Its pathway is carbohydrate biosynthesis; Calvin cycle. The chain is Fructose-1,6-bisphosphatase, chloroplastic from Spinacia oleracea (Spinach).